A 329-amino-acid polypeptide reads, in one-letter code: tRNA dimethylallyltransferase (329 aa).

Residue 12–19 (GPTSVGKT) coordinates ATP. 14–19 (TSVGKT) contacts substrate. Residues 37-40 (DSRY) form an interaction with substrate tRNA region. The disordered stretch occupies residues 306-329 (LREESDEGDVAVHQSGGGKEAPRA). The segment covering 320–329 (SGGGKEAPRA) has biased composition (gly residues).

The protein belongs to the IPP transferase family. As to quaternary structure, monomer. Requires Mg(2+) as cofactor.

It catalyses the reaction adenosine(37) in tRNA + dimethylallyl diphosphate = N(6)-dimethylallyladenosine(37) in tRNA + diphosphate. Functionally, catalyzes the transfer of a dimethylallyl group onto the adenine at position 37 in tRNAs that read codons beginning with uridine, leading to the formation of N6-(dimethylallyl)adenosine (i(6)A). This chain is tRNA dimethylallyltransferase, found in Thermomicrobium roseum (strain ATCC 27502 / DSM 5159 / P-2).